Reading from the N-terminus, the 544-residue chain is 4-coumarate:CoA ligase 1 (544 aa).

This sequence belongs to the ATP-dependent AMP-binding enzyme family. As to quaternary structure, monomer. As to expression, mostly expressed in flower organs, with highest levels in corollas, and, to a lesser extent, in tubes, sepals, pistils, stamen and ovaries. Also present at low levels in leaves.

It is found in the cytoplasm. Its subcellular location is the cytosol. The enzyme catalyses (E)-4-coumarate + ATP + CoA = (E)-4-coumaroyl-CoA + AMP + diphosphate. The catalysed reaction is (E)-caffeate + ATP + CoA = (E)-caffeoyl-CoA + AMP + diphosphate. It carries out the reaction benzoate + ATP + CoA = benzoyl-CoA + AMP + diphosphate. It catalyses the reaction (E)-cinnamate + ATP + CoA = (E)-cinnamoyl-CoA + AMP + diphosphate. The enzyme catalyses (E)-ferulate + ATP + CoA = (E)-feruloyl-CoA + AMP + diphosphate. The protein operates within phenylpropanoid metabolism; trans-cinnamate biosynthesis. It functions in the pathway phytoalexin biosynthesis; 3,4',5-trihydroxystilbene biosynthesis; 3,4',5-trihydroxystilbene from trans-4-coumarate: step 1/2. Its function is as follows. Catalyzes the formation of CoA esters of trans-cinnamic acid, 4-coumaric acid, ferulic acid, benzoic acid and caffeic acid. This chain is 4-coumarate:CoA ligase 1, found in Petunia hybrida (Petunia).